The sequence spans 201 residues: Glycerol-3-phosphate acyltransferase (201 aa).

A run of 5 helical transmembrane segments spans residues 5–25, 55–75, 88–108, 118–138, and 164–184; these read LLGA…FGVV, KMGV…ILLA, WSTA…WLGF, LGIF…GYAV, and TYGV…LIFL.

Belongs to the PlsY family. Probably interacts with PlsX.

The protein resides in the cell inner membrane. It catalyses the reaction an acyl phosphate + sn-glycerol 3-phosphate = a 1-acyl-sn-glycero-3-phosphate + phosphate. Its pathway is lipid metabolism; phospholipid metabolism. Catalyzes the transfer of an acyl group from acyl-phosphate (acyl-PO(4)) to glycerol-3-phosphate (G3P) to form lysophosphatidic acid (LPA). This enzyme utilizes acyl-phosphate as fatty acyl donor, but not acyl-CoA or acyl-ACP. This Anaeromyxobacter dehalogenans (strain 2CP-C) protein is Glycerol-3-phosphate acyltransferase.